The sequence spans 932 residues: Protein translocase subunit SecA (932 aa).

Residues glutamine 87, 105-109 (GEGKT), and aspartate 515 contribute to the ATP site. Zn(2+) contacts are provided by cysteine 916, cysteine 918, cysteine 927, and histidine 928.

This sequence belongs to the SecA family. Monomer and homodimer. Part of the essential Sec protein translocation apparatus which comprises SecA, SecYEG and auxiliary proteins SecDF-YajC and YidC. Zn(2+) serves as cofactor.

The protein localises to the cell inner membrane. Its subcellular location is the cytoplasm. It carries out the reaction ATP + H2O + cellular proteinSide 1 = ADP + phosphate + cellular proteinSide 2.. Functionally, part of the Sec protein translocase complex. Interacts with the SecYEG preprotein conducting channel. Has a central role in coupling the hydrolysis of ATP to the transfer of proteins into and across the cell membrane, serving both as a receptor for the preprotein-SecB complex and as an ATP-driven molecular motor driving the stepwise translocation of polypeptide chains across the membrane. The chain is Protein translocase subunit SecA from Burkholderia lata (strain ATCC 17760 / DSM 23089 / LMG 22485 / NCIMB 9086 / R18194 / 383).